The chain runs to 301 residues: Acetylglutamate kinase (301 aa).

Residues 70 to 71, arginine 92, and asparagine 185 each bind substrate; that span reads GG.

Belongs to the acetylglutamate kinase family. ArgB subfamily.

The protein resides in the cytoplasm. The catalysed reaction is N-acetyl-L-glutamate + ATP = N-acetyl-L-glutamyl 5-phosphate + ADP. It functions in the pathway amino-acid biosynthesis; L-arginine biosynthesis; N(2)-acetyl-L-ornithine from L-glutamate: step 2/4. In terms of biological role, catalyzes the ATP-dependent phosphorylation of N-acetyl-L-glutamate. In Synechococcus elongatus (strain ATCC 33912 / PCC 7942 / FACHB-805) (Anacystis nidulans R2), this protein is Acetylglutamate kinase.